The primary structure comprises 53 residues: Conotoxin Cal22e (53 aa).

Positions 1–5 (GRPSA) are excised as a propeptide.

In terms of processing, contains 4 disulfide bonds. Expressed by the venom duct.

The protein localises to the secreted. Its function is as follows. Probable neurotoxin with unknown target. Possibly targets ion channels. The protein is Conotoxin Cal22e of Californiconus californicus (California cone).